Consider the following 74-residue polypeptide: ATP synthase subunit c (74 aa).

The next 2 helical transmembrane spans lie at 5-25 (LAHI…IGVG) and 49-69 (LFIG…VALL).

This sequence belongs to the ATPase C chain family. In terms of assembly, F-type ATPases have 2 components, F(1) - the catalytic core - and F(0) - the membrane proton channel. F(1) has five subunits: alpha(3), beta(3), gamma(1), delta(1), epsilon(1). F(0) has three main subunits: a(1), b(2) and c(10-14). The alpha and beta chains form an alternating ring which encloses part of the gamma chain. F(1) is attached to F(0) by a central stalk formed by the gamma and epsilon chains, while a peripheral stalk is formed by the delta and b chains.

The protein resides in the cell inner membrane. Functionally, f(1)F(0) ATP synthase produces ATP from ADP in the presence of a proton or sodium gradient. F-type ATPases consist of two structural domains, F(1) containing the extramembraneous catalytic core and F(0) containing the membrane proton channel, linked together by a central stalk and a peripheral stalk. During catalysis, ATP synthesis in the catalytic domain of F(1) is coupled via a rotary mechanism of the central stalk subunits to proton translocation. Key component of the F(0) channel; it plays a direct role in translocation across the membrane. A homomeric c-ring of between 10-14 subunits forms the central stalk rotor element with the F(1) delta and epsilon subunits. This Ruegeria pomeroyi (strain ATCC 700808 / DSM 15171 / DSS-3) (Silicibacter pomeroyi) protein is ATP synthase subunit c.